The following is a 409-amino-acid chain: Peptidase T (409 aa).

H78 serves as a coordination point for Zn(2+). The active site involves D80. D140 is a binding site for Zn(2+). Residue E173 is the Proton acceptor of the active site. Zn(2+) is bound by residues E174, D196, and H379.

This sequence belongs to the peptidase M20B family. It depends on Zn(2+) as a cofactor.

Its subcellular location is the cytoplasm. The enzyme catalyses Release of the N-terminal residue from a tripeptide.. Cleaves the N-terminal amino acid of tripeptides. The chain is Peptidase T from Escherichia coli O139:H28 (strain E24377A / ETEC).